We begin with the raw amino-acid sequence, 277 residues long: MGIKIYRPKTSSLRYKTTLSFDELSKGNDPLKSLTKGKVSRAGRDSSGRISVRRRGGGHKRRYREIDFARRDKFGIPARVAAIEYDPNRSPNIALLVYRDGDKRYIIAPKGVKVGDILESGPNAPIKIGNALPLENIPVGKMVHNIELNIGKGGQLVRGAGGYAMIIASDGDYVTVKLPSGEMRMIFKKCIATLGEVGNEDYMNVSIGKAGKSRWLGRRPKVRGVAMNPIDHPHGGGEGKTSGGRHPVSPWGQPAKGYKTRKKNKYSDKFIVKRRNN.

Disordered regions lie at residues K32–G58 and V225–N277.

Belongs to the universal ribosomal protein uL2 family. As to quaternary structure, part of the 50S ribosomal subunit. Forms a bridge to the 30S subunit in the 70S ribosome.

Functionally, one of the primary rRNA binding proteins. Required for association of the 30S and 50S subunits to form the 70S ribosome, for tRNA binding and peptide bond formation. It has been suggested to have peptidyltransferase activity; this is somewhat controversial. Makes several contacts with the 16S rRNA in the 70S ribosome. This Borrelia recurrentis (strain A1) protein is Large ribosomal subunit protein uL2.